Reading from the N-terminus, the 129-residue chain is ATP synthase epsilon chain (129 aa).

The protein belongs to the ATPase epsilon chain family. In terms of assembly, F-type ATPases have 2 components, CF(1) - the catalytic core - and CF(0) - the membrane proton channel. CF(1) has five subunits: alpha(3), beta(3), gamma(1), delta(1), epsilon(1). CF(0) has three main subunits: a, b and c.

The protein localises to the cell inner membrane. Functionally, produces ATP from ADP in the presence of a proton gradient across the membrane. The chain is ATP synthase epsilon chain from Campylobacter concisus (strain 13826).